Reading from the N-terminus, the 1097-residue chain is DNA-directed RNA polymerase subunit beta (1097 aa).

This sequence belongs to the RNA polymerase beta chain family. In plastids the minimal PEP RNA polymerase catalytic core is composed of four subunits: alpha, beta, beta', and beta''. When a (nuclear-encoded) sigma factor is associated with the core the holoenzyme is formed, which can initiate transcription.

Its subcellular location is the plastid. The protein localises to the chloroplast. The enzyme catalyses RNA(n) + a ribonucleoside 5'-triphosphate = RNA(n+1) + diphosphate. Its function is as follows. DNA-dependent RNA polymerase catalyzes the transcription of DNA into RNA using the four ribonucleoside triphosphates as substrates. The sequence is that of DNA-directed RNA polymerase subunit beta from Rhodomonas salina (Cryptomonas salina).